The chain runs to 302 residues: G-protein coupled receptor A5 (302 aa).

The Extracellular segment spans residues M1–L20. A helical transmembrane segment spans residues I21–F41. At A42–R50 the chain is on the cytoplasmic side. Residues I51–L71 traverse the membrane as a helical segment. At Q72–C81 the chain is on the extracellular side. The chain crosses the membrane as a helical span at residues V82–I102. The Cytoplasmic segment spans residues M103–H122. Residues I123 to L143 traverse the membrane as a helical segment. The Extracellular portion of the chain corresponds to H144–Q173. Residues L174–L194 traverse the membrane as a helical segment. Residues T195–Y208 are Cytoplasmic-facing. A helical membrane pass occupies residues V209 to A229. The Extracellular portion of the chain corresponds to C230 to S249. Residues T250–F270 traverse the membrane as a helical segment. Topologically, residues S271–V302 are cytoplasmic.

This sequence belongs to the G-protein coupled receptor 1 family.

It localises to the host cell membrane. The protein resides in the host endoplasmic reticulum membrane. Its function is as follows. Acts as a viral G-protein coupled receptor that constitutively activates host alphai-type G-proteins, thereby inhibiting host forskolin-triggered CREB activation. This chain is G-protein coupled receptor A5 (A5), found in Connochaetes taurinus (Blue wildebeest).